Reading from the N-terminus, the 170-residue chain is Putative zinc finger protein 542 (170 aa).

Residues 1-42 (MLENYQNLVWLGLSISKSVISLLEKRKLPWIMAKEEIRGPLP) form the KRAB domain. C2H2-type zinc fingers lie at residues 98–120 (NVCK…KRNH) and 126–148 (NQCL…QRIH). The C2H2-type 3; degenerate zinc-finger motif lies at 154–170 (YKCNECIKTFNQRAHLT).

It belongs to the krueppel C2H2-type zinc-finger protein family.

Its subcellular location is the nucleus. In terms of biological role, may be involved in transcriptional regulation. This Homo sapiens (Human) protein is Putative zinc finger protein 542 (ZNF542P).